The primary structure comprises 257 residues: MSKTAIITGSAGGLGKGIAERLANDGFNIVLQDINEALLLETEKEFKEKGYQAVAFKSDVSKKKEQEELVQFAVTEFGQLDVMVNNAGVDAVTPILEIGEEELSKLFNINVFGTLFGIQAAANQFIKQKSKGKIINACSIAGHESYEVLGTYSATKHSVRSFTQTAAKELADKGITVNAYCPGVAKTEMWDRIDEEMVKLDDSLEIGDAFEAFSSEIKLGRYQEPSDVANLVSFLASNDSDYITGQSILTDGGLVYR.

Residue I6–V30 participates in NAD(+) binding. S139 lines the substrate pocket. The Proton acceptor role is filled by Y152. Residue K156 is part of the active site.

The protein belongs to the short-chain dehydrogenases/reductases (SDR) family.

The enzyme catalyses (S)-acetoin + NAD(+) = diacetyl + NADH + H(+). In terms of biological role, catalyzes the irreversible reduction of 2,3-butanediol to (S)-acetoin in the presence of NADH. The chain is Diacetyl reductase [(S)-acetoin forming] (butA) from Staphylococcus epidermidis (strain ATCC 35984 / DSM 28319 / BCRC 17069 / CCUG 31568 / BM 3577 / RP62A).